The following is a 589-amino-acid chain: MWVLMSWLAFAAGLVAGTQCPDGQFCPVACCLDQGGANYSCCNPLLDTWPRITSHHLDGSCQTHGHCPAGYSCLLTVSGTSSCCPFSKGVSCGDGYHCCPQGFHCSADGKSCFQMSDNPLGAVQCPGSQFECPDSATCCIMVDGSWGCCPMPQASCCEDRVHCCPHGASCDLVHTRCVSPTGTHTLLKKFPAQKTNRAVSLPFSVVCPDAKTQCPDDSTCCELPTGKYGCCPMPNAICCSDHLHCCPQDTVCDLIQSKCLSKNYTTDLLTKLPGYPVKEVKCDMEVSCPEGYTCCRLNTGAWGCCPFAKAVCCEDHIHCCPAGFQCHTEKGTCEMGILQVPWMKKVIAPLRLPDPQILKSDTPCDDFTRCPTNNTCCKLNSGDWGCCPIPEAVCCSDNQHCCPQGFTCLAQGYCQKGDTMVAGLEKIPARQTTPLQIGDIGCDQHTSCPVGQTCCPSLKGSWACCQLPHAVCCEDRQHCCPAGYTCNVKARTCEKDVDFIQPPVLLTLGPKVGNVECGEGHFCHDNQTCCKDSAGVWACCPYLKGVCCRDGRHCCPGGFHCSARGTKCLRKKIPRWDMFLRDPVPRPLL.

The signal sequence occupies residues 1–17; the sequence is MWVLMSWLAFAAGLVAG. Asn38 carries N-linked (GlcNAc...) asparagine glycosylation. Intrachain disulfides connect Cys125–Cys138 and Cys132–Cys148. N-linked (GlcNAc...) asparagine glycosylation is present at Asn263. Cystine bridges form between Cys282/Cys294, Cys288/Cys304, Cys295/Cys312, Cys305/Cys319, Cys313/Cys326, Cys320/Cys333, Cys364/Cys376, Cys370/Cys386, Cys395/Cys408, and Cys402/Cys414. Asn373 is a glycosylation site (N-linked (GlcNAc...) asparagine). Asn526 is a glycosylation site (N-linked (GlcNAc...) asparagine).

Belongs to the granulin family. Progranulin is secreted as a homodimer. Interacts with SLPI; interaction protects progranulin from proteolysis. Interacts (via region corresponding to granulin-7 peptide) with CTSD; stabilizes CTSD and increases its proteolytic activity. Interacts (via region corresponding to granulin-7 peptide) with SORT1; this interaction mediates endocytosis and lysosome delivery of progranulin; interaction occurs at the neuronal cell surface in a stressed nervous system. Interacts with PSAP; facilitates lysosomal delivery of progranulin from the extracellular space and the biosynthetic pathway. Forms a complex with PSAP and M6PR; PSAP bridges the binding between progranulin and M6PR. Forms a complex with PSAP and SORT1; progranulin bridges the interaction between PSAP and SORT1; facilitates lysosomal targeting of PSAP via SORT1; interaction enhances PSAP uptake in primary cortical neurons. Interacts (via regions corresponding to granulin-2 and granulin-7 peptides) with GBA1; this interaction prevents aggregation of GBA1-SCARB2 complex via interaction with HSPA1A upon stress. Interacts (via region corresponding to granulin-7 peptide) with HSPA1A; mediates recruitment of HSPA1A to GBA1 and prevents GBA1 aggregation in response to stress. N-glycosylated. Post-translationally, cleaved by ELANE; proteolysis is blocked by SLPI and is concentration- and time-dependent and induces CXCL8/IL-8 production; granulin-3 and granulin-4 are resistant to ELANE. Cleaved by CTSL in lysosome thus regulating the maturation and turnover of progranulin within the lysosome. In terms of tissue distribution, highly expressed at the wound site and diminishes away from the wound. Not expressed in fibroblasts and endothelial cells in intact skin. In adult brain, expressed primarily in neurons and in resting and reactive microglia. Expressed in both neurons and microglia. Highly expressed in activated microglia in response to injury. Expressed in macrophage.

The protein resides in the secreted. Its subcellular location is the lysosome. Secreted protein that acts as a key regulator of lysosomal function and as a growth factor involved in inflammation, wound healing and cell proliferation. Regulates protein trafficking to lysosomes, and also the activity of lysosomal enzymes. Also facilitates the acidification of lysosomes, causing degradation of mature CTSD by CTSB. In addition, functions as a wound-related growth factor that acts directly on dermal fibroblasts and endothelial cells to promote division, migration and the formation of capillary-like tubule structures. Also promotes epithelial cell proliferation by blocking TNF-mediated neutrophil activation preventing release of oxidants and proteases. Moreover, modulates inflammation in neurons by preserving neurons survival, axonal outgrowth and neuronal integrity. Its function is as follows. Inhibits epithelial cell proliferation and induces epithelial cells to secrete IL-8. Functionally, stabilizes CTSD through interaction with CTSD leading to maintain its aspartic-type peptidase activity. The sequence is that of Progranulin (Grn) from Mus musculus (Mouse).